Here is a 1260-residue protein sequence, read N- to C-terminus: Neural cell adhesion molecule L1 (1260 aa).

Residues 1–19 (MVVMLRYVWPLLLCSPCLL) form the signal peptide. At 20–1123 (IQIPDEYKGH…VSTTGSFASE (1104 aa)) the chain is on the extracellular side. 6 consecutive Ig-like C2-type domains span residues 35 to 130 (PVIT…IQLV), 138 to 225 (PKET…EPID), 239 to 327 (PRLL…YYVT), 332 to 419 (PYWL…AYIY), 424 to 506 (PARI…NNVT), and 517 to 600 (TQIT…DEVE). Intrachain disulfides connect Cys-57–Cys-113 and Cys-157–Cys-208. 4 N-linked (GlcNAc...) asparagine glycosylation sites follow: Asn-100, Asn-202, Asn-246, and Asn-293. Disulfide bonds link Cys-263–Cys-311 and Cys-353–Cys-403. N-linked (GlcNAc...) asparagine glycosylation is found at Asn-432, Asn-478, Asn-489, and Asn-504. Residues Cys-447 and Cys-496 are joined by a disulfide bond. A disulfide bond links Cys-538 and Cys-590. 2 short sequence motifs (cell attachment site) span residues 553 to 555 (RGD) and 562 to 564 (RGD). Residues Asn-587 and Asn-670 are each glycosylated (N-linked (GlcNAc...) asparagine). Fibronectin type-III domains are found at residues 613–711 (PVPH…TPEA), 716–809 (NPVD…SGED), 811–916 (PQVS…PEGV), 919–1015 (HPEA…MALF), and 1014–1112 (LFGK…TGPV). A disordered region spans residues 697–724 (GEPSPVSESVVTPEAAPEKNPVDVRGEG). The segment covering 712–724 (APEKNPVDVRGEG) has biased composition (basic and acidic residues). 11 N-linked (GlcNAc...) asparagine glycosylation sites follow: Asn-725, Asn-776, Asn-824, Asn-848, Asn-875, Asn-968, Asn-978, Asn-1022, Asn-1030, Asn-1073, and Asn-1107. A helical membrane pass occupies residues 1124–1146 (GWFIAFVSAIILLLLILLILCFI). The Cytoplasmic segment spans residues 1147–1260 (KRSKGGKYSV…SPINPAVALE (114 aa)). Phosphoserine occurs at positions 1166, 1181, 1184, 1197, 1246, 1247, and 1251. Disordered stretches follow at residues 1183-1210 (ESDN…SDDS) and 1229-1260 (IGQY…VALE). A compositionally biased stretch (polar residues) spans 1244 to 1253 (NDSSGATSPI).

Belongs to the immunoglobulin superfamily. L1/neurofascin/NgCAM family. As to quaternary structure, interacts with SHTN1; the interaction occurs in axonal growth cones. Interacts with isoform 2 of BSG. Expressed in the brain, including in the molecular layer of the cerebellar cortex, the fiber-rich layers of the hippocampus (alveus, and strata lacunosum moleculare, radiatum, and oriens), the nerve fiber layer and the inner and outer plexiform layers of the retina, and in the molecular layer of the olfactory bulb (at protein level).

It is found in the cell membrane. It localises to the cell projection. Its subcellular location is the growth cone. Neural cell adhesion molecule involved in the dynamics of cell adhesion and in the generation of transmembrane signals at tyrosine kinase receptors. During brain development, critical in multiple processes, including neuronal migration, axonal growth and fasciculation, and synaptogenesis. In the mature brain, plays a role in the dynamics of neuronal structure and function, including synaptic plasticity. The sequence is that of Neural cell adhesion molecule L1 (L1cam) from Mus musculus (Mouse).